A 175-amino-acid chain; its full sequence is MPKRSCPFADVAPLQLKVRVSQRELSRGVCAERYSQEVFEKTKRLLFLGAQAYLDHVWDEGCAVVHLPESPKPGPTGAPRAARGQMLIGPDGRLIRSLGQASEADPSGVASIACSSCVRAVDGKAVCGQCERALCGQCVRTCWGCGSVACTLCGLVDCSDMYEKVLCTSCAMFET.

Y34 bears the Phosphotyrosine; by ABL2 mark. An interaction with BCL2L1 isoform Bcl-x(L) and inhibition of BCL2L1 anti-apoptotic activity region spans residues 36–55 (QEVFEKTKRLLFLGAQAYLD). S70 is subject to Phosphoserine. An interaction with coxsackievirus B3 VP2 region spans residues 105 to 123 (DPSGVASIACSSCVRAVDG).

As to quaternary structure, binds through its N-terminal region to the C-terminus of CD27 and to PXMP2/PMP22. Binds to the C-terminus of TNFRSF18/GITR. Isoform 1 binds to BCL2L1/BCLX isoform Bcl-x(L) but not to BAX. (Microbial infection) Interacts with coxsackievirus B3 capsid protein VP2; this interaction inhibits the binding of SIVA1 to CD27. The cofactor is Zn(2+). Phosphorylated by ABL2/ARG in response to oxidative stress. Ubiquitous. Mostly expressed in thymus, testis, ovary, prostate, small intestine and spleen and less in colon.

Its subcellular location is the cytoplasm. The protein localises to the nucleus. Induces CD27-mediated apoptosis. Inhibits BCL2L1 isoform Bcl-x(L) anti-apoptotic activity. Inhibits activation of NF-kappa-B and promotes T-cell receptor-mediated apoptosis. This Homo sapiens (Human) protein is Apoptosis regulatory protein Siva (SIVA1).